The primary structure comprises 499 residues: Protein flp (499 aa).

The next 4 membrane-spanning stretches (helical) occupy residues 6–26 (LYFL…IYIT), 389–409 (FNIV…FSAY), 433–453 (LTLC…YLIL), and 471–491 (LTLT…LLIL).

The protein localises to the cell membrane. Its function is as follows. Its precise function is unknown. Has no penicillin-binding activity and is not involved in methicillin resistance. This is Protein flp (flp) from Staphylococcus aureus (strain MRSA252).